We begin with the raw amino-acid sequence, 252 residues long: uncharacterized protein (252 aa).

The protein belongs to the methyltransferase superfamily.

This is an uncharacterized protein from Mycobacterium sp. (strain KMS).